The primary structure comprises 287 residues: 4-hydroxybenzoate octaprenyltransferase (287 aa).

The next 8 helical transmembrane spans lie at 21-39, 95-115, 116-136, 138-158, 161-181, 213-233, 234-251, and 264-284; these read PIGT…WLAA, VLAL…TMNP, LTIG…FMKR, IPIP…MAYA, ANAL…WTIA, IIGA…QLSE, LGSS…LFVY, and CFQA…GVVI.

This sequence belongs to the UbiA prenyltransferase family. It depends on Mg(2+) as a cofactor.

It localises to the cell inner membrane. The enzyme catalyses all-trans-octaprenyl diphosphate + 4-hydroxybenzoate = 4-hydroxy-3-(all-trans-octaprenyl)benzoate + diphosphate. It functions in the pathway cofactor biosynthesis; ubiquinone biosynthesis. In terms of biological role, catalyzes the prenylation of para-hydroxybenzoate (PHB) with an all-trans polyprenyl group. Mediates the second step in the final reaction sequence of ubiquinone-8 (UQ-8) biosynthesis, which is the condensation of the polyisoprenoid side chain with PHB, generating the first membrane-bound Q intermediate 3-octaprenyl-4-hydroxybenzoate. The chain is 4-hydroxybenzoate octaprenyltransferase from Aeromonas hydrophila subsp. hydrophila (strain ATCC 7966 / DSM 30187 / BCRC 13018 / CCUG 14551 / JCM 1027 / KCTC 2358 / NCIMB 9240 / NCTC 8049).